We begin with the raw amino-acid sequence, 83 residues long: Three-finger toxin MALT0058C (83 aa).

The N-terminal stretch at 1–21 (MKTLLLTLVVVTIVCLDFGHT) is a signal peptide. 4 cysteine pairs are disulfide-bonded: Cys24/Cys45, Cys38/Cys62, Cys64/Cys75, and Cys76/Cys81.

The protein belongs to the three-finger toxin family. Short-chain subfamily. Type I alpha-neurotoxin sub-subfamily. Expressed by the venom gland.

Its subcellular location is the secreted. Binds to muscle nicotinic acetylcholine receptor (nAChR) and inhibits acetylcholine from binding to the receptor, thereby impairing neuromuscular transmission. This chain is Three-finger toxin MALT0058C, found in Micrurus altirostris (Uruguayan coral snake).